A 338-amino-acid polypeptide reads, in one-letter code: Cytoskeleton protein RodZ (338 aa).

Over 1-111 the chain is Cytoplasmic; sequence MNTEATHEEN…LGKSRKKRDG (111 aa). The HTH cro/C1-type domain maps to 19–71; it reads LRLAREQLGLSQQVVAERLCLKVSTVRDIEEDKAPADLASTFLRGYIRSYARL. The H-T-H motif DNA-binding region spans 30–49; sequence QQVVAERLCLKVSTVRDIEE. A helical; Signal-anchor for type II membrane protein transmembrane segment spans residues 112–132; sequence WLMSFTWLVLFVVVGLTGAWW. At 133-338 the chain is on the periplasmic side; sequence WQNHKAQQEE…TLNAEQSVTQ (206 aa). Polar residues-rich tracts occupy residues 147–180 and 189–214; these read ADQS…QDQA and GDTQ…SQQP. The disordered stretch occupies residues 147 to 245; the sequence is ADQSSAELSQ…AQSQLPVGQA (99 aa). A compositionally biased stretch (low complexity) spans 220-239; that stretch reads SQANTDTAAQQNTTQPAQSQ.

Belongs to the RodZ family.

It is found in the cell inner membrane. In terms of biological role, cytoskeletal protein that is involved in cell-shape control through regulation of the length of the long axis. This Cronobacter sakazakii (strain ATCC BAA-894) (Enterobacter sakazakii) protein is Cytoskeleton protein RodZ.